The chain runs to 2209 residues: MGAQVSSQKVGAHENSNRAYGGSTINYTTINYYRDSASNAASKQDFSQDPSKFTEPIKDVLIKTAPMLNSPNIEACGYSDRVLQLTLGNSTITTQEAANSVVAYGRWPEYLRDSEANPVDQPTEPDVAACRFYTLDTVSWTKESRGWWWKLPDALRDMGLFGQNMYYHYLGRSGYTVHVQCNASKFHQGALGVFAVPEMCLAGDSNTTTMHTSYQNANPGEKGGTFTGTFTPDNNQTSPARRFCPVDYLLGNGTLLGNAFVFPHQIINLRTNNCATLVLPYVNSLSIDSMVKHNNWGIAILPLAPLNFASESSPEIPITLTIAPMCCEFNGLRNITLPRLQGLPVMNTPGSNQYLTADNFQSPCALPEFDVTPPIDIPGEVKNMMELAEIDTMIPFDLSATKKNTMEMYRVRLSDKPHTDDPILCLSLSPASDPRLSHTMLGEILNYYTHWAGSLKFTFLFCGFMMATGKLLVSYAPPGADPPKKRKEAMLGTHVIWDIGLQSSCTMVVPWISNTTYRQTIDDSFTEGGYISVFYQTRIVVPLSTPREMDILGFVSACNDFSVRLLRDTTHIEQKALAQGLGQMLESMIDNTVRETVGAATSRDALPNTEASGPTHSKEIPALTAVETGATNPLVPSDTVQTRHVVQHRSRSESSIESFFARGACVTIMTVDNPASTTNKDKLFAVWKITYKDTVQLRRKLEFFTYSRFDMELTFVVTANFTETNNGHALNQVYQIMYVPPGAPVPEKWDDYTWQTSSNPSIFYTYGTAPARISVPYVGISNAYSHFYDGFSKVPLKDQSAALGDSLYGAASLNDFGILAVRVVNDHNPTKVTSKIRVYLKPKHIRVWCPRPPRAVAYYGPGVDYKDGTLTPLSTKDLTTYGFGHQNKAVYTAGYKICNYHLATQDDLQNAVNVMWSRDLLVTESRAQGTDSIARCNCNAGVYYCESRRKYYPVSFVGPTFQYMEANNYYPARYQSHMLIGHGFASPGDCGGILRCHHGVIGIITAGGEGLVAFSDIRDLYAYEEEAMEQGITNYIESLGAAFGSGFTQQISDKITELTNMVTSTITEKLLKNLIKIISSLVIITRNYEDTTTVLATLALLGCDASPWQWLRKKACDVLEIPYVIKQGDSWLKKFTEACNAAKGLEWVSNKISKFIDWLKEKIIPQARDKLEFVTKLRQLEMLENQISTIHQSCPSQEHQEILFNNVRWLSIQSKRFAPLYAVEAKRIQKLEHTINNYIQFKSKHRIEPVCLLVHGSPGTGKSVATNLIARAIAERENTSTYSLPPDPSHFDGYKQQGVVIMDDLNQNPDGADMKLFCQMVSTVEFIPPMASLEEKGILFTSNYVLASTNSSRISPPTVAHSDALARRFAFDMDIQVMNEYSRDGKLNMAMATEMCKNCHQPANFKRCCPLVCGKAIQLMDKSSRVRYSIDQITTMIINERNRRSNIGNCMEALFQGPLQYKDLKIDIKTSPPPECINDLLQAVDSQEVRDYCEKKGWIVNITSQVQTERNINRAMTILQAVTTFAAVAGVVYVMYKLFAGHQGAYTGLPNKKPNVPTIRTAKVQGPGFDYAVAMAKRNIVTATTSKGEFTMLGVHDNVAILPTHASPGESIVIDGKEVEILDAKALEDQAGTNLEITIITLKRNEKFRDIRPHIPTQITETNDGVLIVNTSKYPNMYVPVGAVTEQGYLNLGGRQTARTLMYNFPTRAGQCGGVITCTGKVIGMHVGGNGSHGFAAALKRSYFTQSQGEIQWMRPSKEVGYPIINAPSKTKLEPSAFHYVFEGVKEPAVLTKNDPRLKTDFEEAIFSKYVGNKITEVDEYMKEAVDHYAGQLMSLDINTEQMCLEDAMYGTDGLEALDLSTSAGYPYVAMGKKKRDILNKQTRDTKEMQKLLDTYGINLPLVTYVKDELRSKTKVEQGKSRLIEASSLNDSVAMRMAFGNLYAAFHKNPGVITGSAVGCDPDLFWSKIPVLMEEKLFAFDYTGYDASLSPAWFEALKMVLEKIGFGDRVDYIDYLNHSHHLYKNKTYCVKGGMPSGCSGTSIFNSMINNLIIRTLLLKTYKGIDLDHLKMIAYGDDVIASYPHEVDASLLAQSGKDYGLTMTPADKSATFETVTWENVTFLKRFFRADEKYPFLIHPVMPMKEIHESIRWTKDPRNTQDHVRSLCLLAWHNGEEEYNKFLAKIRSVPIGRALLLPEYSTLYRRWLDSF.

Residue glycine 2 is the site of N-myristoyl glycine; by host attachment. Residues 2-1520 (GAQVSSQKVG…NINRAMTILQ (1519 aa)) are Cytoplasmic-facing. Residues 580–600 (GLGQMLESMIDNTVRETVGAA) are amphipathic alpha-helix. The tract at residues 599-619 (AATSRDALPNTEASGPTHSKE) is disordered. Catalysis depends on for protease 2A activity residues histidine 901 and aspartate 919. Positions 936 and 938 each coordinate Zn(2+). Cysteine 990 acts as the For protease 2A activity in catalysis. Residues cysteine 996 and histidine 998 each contribute to the Zn(2+) site. Residues 1128-1200 (GDSWLKKFTE…HQSCPSQEHQ (73 aa)) form a membrane-binding region. Residues 1128-1266 (GDSWLKKFTE…SPGTGKSVAT (139 aa)) are oligomerization. The RNA-binding stretch occupies residues 1149 to 1153 (SNKIS). An SF3 helicase domain is found at 1232-1388 (EHTINNYIQF…NEYSRDGKLN (157 aa)). 1256 to 1263 (GSPGTGKS) contributes to the ATP binding site. Cysteine 1396, cysteine 1399, cysteine 1408, and cysteine 1413 together coordinate Zn(2+). Residues 1396-1413 (CKNCHQPANFKRCCPLVC) form a C4-type zinc finger. Residues 1440–1447 (ERNRRSNI) are RNA-binding. The segment at 1451 to 1456 (MEALFQ) is oligomerization. The stretch at 1521–1536 (AVTTFAAVAGVVYVMY) is an intramembrane region. The Cytoplasmic segment spans residues 1537-2209 (KLFAGHQGAY…TLYRRWLDSF (673 aa)). Tyrosine 1546 carries the O-(5'-phospho-RNA)-tyrosine modification. An O-UMP-tyrosine; transient modification is found at tyrosine 1546. Residues 1566–1744 (GPGFDYAVAM…FAAALKRSYF (179 aa)) enclose the Peptidase C3 domain. Residues histidine 1605, glutamate 1636, and cysteine 1712 each act as for protease 3C activity in the active site. Residues 1975–2090 (EKLFAFDYTG…SYPHEVDASL (116 aa)) enclose the RdRp catalytic domain. Mg(2+)-binding residues include aspartate 1981 and aspartate 2076.

This sequence belongs to the picornaviruses polyprotein family. As to quaternary structure, interacts with capsid protein VP1 and capsid protein VP3 to form heterotrimeric protomers. Interacts with capsid protein VP0, and capsid protein VP3 to form heterotrimeric protomers. Five protomers subsequently associate to form pentamers which serve as building blocks for the capsid. Interacts with capsid protein VP2, capsid protein VP3 and capsid protein VP4 following cleavage of capsid protein VP0. Interacts with human PVR. In terms of assembly, interacts with capsid protein VP1 and capsid protein VP3 in the mature capsid. As to quaternary structure, interacts with capsid protein VP0 and capsid protein VP1 to form heterotrimeric protomers. Five protomers subsequently associate to form pentamers which serve as building blocks for the capsid. Interacts with capsid protein VP4 in the mature capsid. Interacts with protein 2C; this interaction may be important for virion morphogenesis. Interacts with capsid protein VP1 and capsid protein VP3. In terms of assembly, homodimer. As to quaternary structure, homohexamer; forms a hexameric ring structure with 6-fold symmetry characteristic of AAA+ ATPases. Interacts (via N-terminus) with host RTN3 (via reticulon domain); this interaction is important for viral replication. Interacts with capsid protein VP3; this interaction may be important for virion morphogenesis. Interacts with protein 3CD. In terms of assembly, homodimer. Interacts with host GBF1. Interacts (via GOLD domain) with host ACBD3 (via GOLD domain); this interaction allows the formation of a viral protein 3A/ACBD3 heterotetramer with a 2:2 stoichiometry, which will stimulate the recruitment of host PI4KB in order to synthesize PI4P at the viral RNA replication sites. As to quaternary structure, interacts with RNA-directed RNA polymerase. Interacts with protein 3AB and with RNA-directed RNA polymerase. In terms of assembly, interacts with Viral protein genome-linked and with protein 3CD. Mg(2+) is required as a cofactor. In terms of processing, specific enzymatic cleavages in vivo by the viral proteases yield processing intermediates and the mature proteins. Myristoylation is required for the formation of pentamers during virus assembly. Further assembly of 12 pentamers and a molecule of genomic RNA generates the provirion. Post-translationally, during virion maturation, immature virions are rendered infectious following cleavage of VP0 into VP4 and VP2. This maturation seems to be an autocatalytic event triggered by the presence of RNA in the capsid and it is followed by a conformational change infectious virion. In terms of processing, myristoylation is required during RNA encapsidation and formation of the mature virus particle. VPg is uridylylated by the polymerase into VPg-pUpU. This acts as a nucleotide-peptide primer for the genomic RNA replication.

It localises to the virion. The protein localises to the host cytoplasm. Its subcellular location is the host cytoplasmic vesicle membrane. It is found in the host nucleus. It carries out the reaction RNA(n) + a ribonucleoside 5'-triphosphate = RNA(n+1) + diphosphate. The enzyme catalyses Selective cleavage of Tyr-|-Gly bond in the picornavirus polyprotein.. The catalysed reaction is a ribonucleoside 5'-triphosphate + H2O = a ribonucleoside 5'-diphosphate + phosphate + H(+). It catalyses the reaction Selective cleavage of Gln-|-Gly bond in the poliovirus polyprotein. In other picornavirus reactions Glu may be substituted for Gln, and Ser or Thr for Gly.. Its activity is regulated as follows. Replication or transcription is subject to high level of random mutations by the nucleotide analog ribavirin. Its function is as follows. Forms an icosahedral capsid of pseudo T=3 symmetry with capsid proteins VP2 and VP3. The capsid is 300 Angstroms in diameter, composed of 60 copies of each capsid protein and enclosing the viral positive strand RNA genome. Capsid protein VP1 mainly forms the vertices of the capsid. Capsid protein VP1 interacts with host cell receptor PVR to provide virion attachment to target host epithelial cells. This attachment induces virion internalization predominantly through clathrin- and caveolin-independent endocytosis in Hela cells and through caveolin-mediated endocytosis in brain microvascular endothelial cells. Tyrosine kinases are probably involved in the entry process. Virus binding to PVR induces increased junctional permeability and rearrangement of junctional proteins. Modulation of endothelial tight junctions, as well as cytolytic infection of endothelial cells themselves, may result in loss of endothelial integrity which may help the virus to reach the CNS. After binding to its receptor, the capsid undergoes conformational changes. Capsid protein VP1 N-terminus (that contains an amphipathic alpha-helix) and capsid protein VP4 are externalized. Together, they shape a pore in the host membrane through which viral genome is translocated to host cell cytoplasm. In terms of biological role, forms an icosahedral capsid of pseudo T=3 symmetry with capsid proteins VP1 and VP3. The capsid is 300 Angstroms in diameter, composed of 60 copies of each capsid protein and enclosing the viral positive strand RNA genome. Functionally, forms an icosahedral capsid of pseudo T=3 symmetry with capsid proteins VP2 and VP1. The capsid is 300 Angstroms in diameter, composed of 60 copies of each capsid protein and enclosing the viral positive strand RNA genome. Lies on the inner surface of the capsid shell. After binding to the host receptor, the capsid undergoes conformational changes. Capsid protein VP4 is released, Capsid protein VP1 N-terminus is externalized, and together, they shape a pore in the host membrane through which the viral genome is translocated into the host cell cytoplasm. Its function is as follows. Component of immature procapsids, which is cleaved into capsid proteins VP4 and VP2 after maturation. Allows the capsid to remain inactive before the maturation step. In terms of biological role, cysteine protease that cleaves viral polyprotein and specific host proteins. It is responsible for the autocatalytic cleavage between the P1 and P2 regions, which is the first cleavage occurring in the polyprotein. Also cleaves the host translation initiation factor EIF4G1, in order to shut down the capped cellular mRNA translation. Inhibits the host nucleus-cytoplasm protein and RNA trafficking by cleaving host members of the nuclear pores including NUP98, NUP62 and NUP153. Counteracts stress granule formation probably by antagonizing its assembly or promoting its dissassembly. Cleaves and inhibits host IFIH1/MDA5, thereby inhibiting the type-I IFN production and the establishment of the antiviral state. Cleaves and inhibits host MAVS, thereby inhibiting the type-I IFN production and the establishment of the antiviral state. Functionally, plays an essential role in the virus replication cycle by acting as a viroporin. Creates a pore in the host endoplasmic reticulum and as a consequence releases Ca2+ in the cytoplasm of infected cell. In turn, high levels of cytoplasmic calcium may trigger membrane trafficking and transport of viral ER-associated proteins to viroplasms, sites of viral genome replication. Induces and associates with structural rearrangements of intracellular membranes. Displays RNA-binding, nucleotide binding and NTPase activities. May play a role in virion morphogenesis and viral RNA encapsidation by interacting with the capsid protein VP3. Its function is as follows. Localizes the viral replication complex to the surface of membranous vesicles. Together with protein 3CD binds the Cis-Active RNA Element (CRE) which is involved in RNA synthesis initiation. Acts as a cofactor to stimulate the activity of 3D polymerase, maybe through a nucleid acid chaperone activity. In terms of biological role, localizes the viral replication complex to the surface of membranous vesicles. It inhibits host cell endoplasmic reticulum-to-Golgi apparatus transport and causes the disassembly of the Golgi complex, possibly through GBF1 interaction. This would result in depletion of MHC, trail receptors and IFN receptors at the host cell surface. Plays an essential role in viral RNA replication by recruiting ACBD3 and PI4KB at the viral replication sites, thereby allowing the formation of the rearranged membranous structures where viral replication takes place. Functionally, acts as a primer for viral RNA replication and remains covalently bound to viral genomic RNA. VPg is uridylylated prior to priming replication into VPg-pUpU. The oriI viral genomic sequence may act as a template for this. The VPg-pUpU is then used as primer on the genomic RNA poly(A) by the RNA-dependent RNA polymerase to replicate the viral genome. During genome replication, the VPg-RNA linkage is removed by the host TDP2, thereby accelerating replication. During the late stage of the replication cycle, host TDP2 is excluded from sites of viral RNA synthesis and encapsidation, allowing for the generation of progeny virions. Involved in the viral replication complex and viral polypeptide maturation. It exhibits protease activity with a specificity and catalytic efficiency that is different from protease 3C. Protein 3CD binds to the 5'UTR of the viral genome. Its function is as follows. Major viral protease that mediates proteolytic processing of the polyprotein. Cleaves host EIF5B, contributing to host translation shutoff. Cleaves also host PABPC1, contributing to host translation shutoff. Cleaves host RIGI and thus contributes to the inhibition of type I interferon production. Cleaves host NLRP1, triggers host N-glycine-mediated degradation of the autoinhibitory NLRP1 N-terminal fragment. Inhibits the integrated stress response (ISR) in the infected cell by cleaving host G3BP1. Stress granule formation is thus inhibited, which allows protein synthesis and viral replication. In terms of biological role, replicates the viral genomic RNA on the surface of intracellular membranes. May form linear arrays of subunits that propagate along a strong head-to-tail interaction called interface-I. Covalently attaches UMP to a tyrosine of VPg, which is used to prime RNA synthesis. The positive stranded RNA genome is first replicated at virus induced membranous vesicles, creating a dsRNA genomic replication form. This dsRNA is then used as template to synthesize positive stranded RNA genomes. ss(+)RNA genomes are either translated, replicated or encapsidated. The protein is Genome polyprotein of Homo sapiens (Human).